The following is a 289-amino-acid chain: Glyceraldehyde-3-phosphate dehydrogenase (289 aa).

2 residues coordinate NAD(+): Asp12 and Arg57. Residues 128–130 (SCT), Thr159, 188–189 (TG), and Arg211 each bind D-glyceraldehyde 3-phosphate. Catalysis depends on Cys129, which acts as the Nucleophile.

This sequence belongs to the glyceraldehyde-3-phosphate dehydrogenase family. As to quaternary structure, homotetramer.

The protein resides in the cytoplasm. It carries out the reaction D-glyceraldehyde 3-phosphate + phosphate + NAD(+) = (2R)-3-phospho-glyceroyl phosphate + NADH + H(+). Its pathway is carbohydrate degradation; glycolysis; pyruvate from D-glyceraldehyde 3-phosphate: step 1/5. This is Glyceraldehyde-3-phosphate dehydrogenase (GPD) from Amanita muscaria (Fly agaric).